A 274-amino-acid polypeptide reads, in one-letter code: MHLLRTLLLRSNTSNISLLTKCAFRACPLQKWPVSLRSGCQVSVLPTQQKKWLHSQPKQQDSSTKTPVHDLPSGSQHQSEESSPSAKSSISTDTSIVAETDPLQDQSIGLLKRFKKTFKQHGKVLIPVHLVTSSFWFGSFYYAAMKGVNVVPFLEFIGLPDVIVNILKNSQGGNALTAYAMYKIATPARYTVTLGGTSLSVKYLRKYGYLSTPPLVKDYFQDRMEETKELFTEKMEETRDIISGKMEETKDRISEKLQETKDRVAFRKKKNEEM.

Residues 51–66 show a composition bias toward polar residues; sequence KWLHSQPKQQDSSTKT. The segment at 51 to 91 is disordered; sequence KWLHSQPKQQDSSTKTPVHDLPSGSQHQSEESSPSAKSSIS. Low complexity predominate over residues 81–91; sequence ESSPSAKSSIS. A DUF1279 domain is found at 105–217; the sequence is DQSIGLLKRF…GYLSTPPLVK (113 aa). Residues 124–144 form a helical membrane-spanning segment; the sequence is VLIPVHLVTSSFWFGSFYYAA. Residues 221–274 are a coiled coil; sequence QDRMEETKELFTEKMEETRDIISGKMEETKDRISEKLQETKDRVAFRKKKNEEM.

It belongs to the FAM210 family.

Its subcellular location is the membrane. The protein localises to the mitochondrion. It localises to the cytoplasm. Functionally, may play a role in the structure and strength of both muscle and bone. This is Protein FAM210A (fam210a) from Xenopus tropicalis (Western clawed frog).